A 365-amino-acid polypeptide reads, in one-letter code: 3-isopropylmalate dehydrogenase (365 aa).

78–91 (GKKWNNLPIEKRPE) contributes to the NAD(+) binding site. Substrate-binding residues include Arg99, Arg109, Arg139, and Asp228. Residues Asp228, Asp252, and Asp256 each contribute to the Mg(2+) site. 286–298 (GSAPDIAGKNIAN) lines the NAD(+) pocket.

This sequence belongs to the isocitrate and isopropylmalate dehydrogenases family. LeuB type 1 subfamily. In terms of assembly, homodimer. Mg(2+) serves as cofactor. It depends on Mn(2+) as a cofactor.

Its subcellular location is the cytoplasm. It carries out the reaction (2R,3S)-3-isopropylmalate + NAD(+) = 4-methyl-2-oxopentanoate + CO2 + NADH. The protein operates within amino-acid biosynthesis; L-leucine biosynthesis; L-leucine from 3-methyl-2-oxobutanoate: step 3/4. Functionally, catalyzes the oxidation of 3-carboxy-2-hydroxy-4-methylpentanoate (3-isopropylmalate) to 3-carboxy-4-methyl-2-oxopentanoate. The product decarboxylates to 4-methyl-2 oxopentanoate. The chain is 3-isopropylmalate dehydrogenase from Buchnera aphidicola subsp. Macrosiphoniella ludovicianae.